The primary structure comprises 564 residues: CTP synthase (564 aa).

An amidoligase domain region spans residues 1 to 272; that stretch reads MARPKNVKHI…DIRVLKKLGL (272 aa). Ser18 lines the CTP pocket. UTP is bound at residue Ser18. 19 to 24 serves as a coordination point for ATP; sequence SLGKGI. Tyr59 lines the L-glutamine pocket. Residue Asp76 participates in ATP binding. Positions 76 and 146 each coordinate Mg(2+). Residues 153-155, 193-198, and Lys229 contribute to the CTP site; these read DIE and KTKPTQ. UTP contacts are provided by residues 193 to 198 and Lys229; that span reads KTKPTQ. In terms of domain architecture, Glutamine amidotransferase type-1 spans 299–543; it reads TIAICGKYTE…VAAAKEFAHG (245 aa). Gly363 contacts L-glutamine. Catalysis depends on Cys390, which acts as the Nucleophile; for glutamine hydrolysis. L-glutamine-binding positions include 391-394, Glu414, and Arg471; that span reads LGMQ. Active-site residues include His516 and Glu518.

The protein belongs to the CTP synthase family. In terms of assembly, homotetramer.

The catalysed reaction is UTP + L-glutamine + ATP + H2O = CTP + L-glutamate + ADP + phosphate + 2 H(+). It catalyses the reaction L-glutamine + H2O = L-glutamate + NH4(+). It carries out the reaction UTP + NH4(+) + ATP = CTP + ADP + phosphate + 2 H(+). The protein operates within pyrimidine metabolism; CTP biosynthesis via de novo pathway; CTP from UDP: step 2/2. With respect to regulation, allosterically activated by GTP, when glutamine is the substrate; GTP has no effect on the reaction when ammonia is the substrate. The allosteric effector GTP functions by stabilizing the protein conformation that binds the tetrahedral intermediate(s) formed during glutamine hydrolysis. Inhibited by the product CTP, via allosteric rather than competitive inhibition. Functionally, catalyzes the ATP-dependent amination of UTP to CTP with either L-glutamine or ammonia as the source of nitrogen. Regulates intracellular CTP levels through interactions with the four ribonucleotide triphosphates. This is CTP synthase from Prosthecochloris aestuarii (strain DSM 271 / SK 413).